The sequence spans 69 residues: Putative membrane protein insertion efficiency factor (69 aa).

Belongs to the UPF0161 family.

The protein localises to the cell membrane. Its function is as follows. Could be involved in insertion of integral membrane proteins into the membrane. The sequence is that of Putative membrane protein insertion efficiency factor from Clostridium botulinum (strain ATCC 19397 / Type A).